A 276-amino-acid polypeptide reads, in one-letter code: MAD2L1-binding protein (276 aa).

Acidic residues predominate over residues 1-10; it reads MAASGEEDMS. A disordered region spans residues 1–30; that stretch reads MAASGEEDMSELSPAAAPNLDWYEKPEETH. The interaction with MAD2L1 stretch occupies residues 49-81; that stretch reads PAEPFCPRDLVPVVFPGPVSQEDCCQFTCELLK.

The protein belongs to the MAD2L1BP family. In terms of assembly, interacts with MAD2L1.

It is found in the nucleus. The protein localises to the nucleoplasm. It localises to the cytoplasm. The protein resides in the cytoskeleton. Its subcellular location is the spindle. In terms of biological role, may function to silence the spindle checkpoint and allow mitosis to proceed through anaphase by binding MAD2L1 after it has become dissociated from the MAD2L1-CDC20 complex. In Mus musculus (Mouse), this protein is MAD2L1-binding protein (Mad2l1bp).